The chain runs to 421 residues: DUF724 domain-containing protein 8 (421 aa).

2 stretches are compositionally biased toward polar residues: residues Thr149–Glu165 and Pro199–Asn213. Residues Thr149–Leu229 form a disordered region. The DUF724 domain maps to Val246 to Pro420. Residues Glu361–Ser397 adopt a coiled-coil conformation.

In terms of tissue distribution, expressed in leaves and flowers, and at lower levels in roots, stems and siliques.

The protein resides in the nucleus. May be involved in the polar growth of plant cells via transportation of RNAs. This chain is DUF724 domain-containing protein 8, found in Arabidopsis thaliana (Mouse-ear cress).